The chain runs to 290 residues: Translin-associated protein X (290 aa).

Residues methionine 1–serine 32 are disordered. The segment covering aspartate 16–aspartate 28 has biased composition (basic and acidic residues). The interval leucine 73–asparagine 208 is interaction with C1D. The Mg(2+) site is built by glutamate 129 and glutamate 197. Residue lysine 279 forms a Glycyl lysine isopeptide (Lys-Gly) (interchain with G-Cter in SUMO2) linkage.

Belongs to the translin family. As to quaternary structure, ring-shaped heterooctamer of six TSN and two TSNAX subunits. Interacts with GOLGA3, TSNAXIP1, SUN1 and AKAP9. Interacts with the homodimeric form of C1D following gamma-radiation. Interacts with TSN and C1D in a mutually exclusive manner. In terms of processing, sumoylated with SUMO1.

The protein localises to the cytoplasm. Its subcellular location is the perinuclear region. The protein resides in the golgi apparatus. It localises to the nucleus. Acts in combination with TSN as an endonuclease involved in the activation of the RNA-induced silencing complex (RISC). Possible role in spermatogenesis. This chain is Translin-associated protein X (TSNAX), found in Pongo abelii (Sumatran orangutan).